The sequence spans 276 residues: Diaminopimelate epimerase (276 aa).

Substrate is bound by residues asparagine 11, glutamine 44, and asparagine 64. Cysteine 73 functions as the Proton donor in the catalytic mechanism. Substrate-binding positions include 74-75 (IN), asparagine 159, asparagine 192, and 210-211 (ER). Cysteine 219 (proton acceptor) is an active-site residue. Position 220-221 (220-221 (GS)) interacts with substrate.

It belongs to the diaminopimelate epimerase family. As to quaternary structure, homodimer.

Its subcellular location is the cytoplasm. The enzyme catalyses (2S,6S)-2,6-diaminopimelate = meso-2,6-diaminopimelate. It participates in amino-acid biosynthesis; L-lysine biosynthesis via DAP pathway; DL-2,6-diaminopimelate from LL-2,6-diaminopimelate: step 1/1. In terms of biological role, catalyzes the stereoinversion of LL-2,6-diaminopimelate (L,L-DAP) to meso-diaminopimelate (meso-DAP), a precursor of L-lysine and an essential component of the bacterial peptidoglycan. This Wigglesworthia glossinidia brevipalpis protein is Diaminopimelate epimerase.